Here is a 119-residue protein sequence, read N- to C-terminus: Integration host factor subunit alpha (119 aa).

Positions 96–119 (INGQQGSGKMNGEASHEQLSAEPE) are disordered.

The protein belongs to the bacterial histone-like protein family. Heterodimer of an alpha and a beta chain.

Functionally, this protein is one of the two subunits of integration host factor, a specific DNA-binding protein that functions in genetic recombination as well as in transcriptional and translational control. The polypeptide is Integration host factor subunit alpha (Bradyrhizobium sp. (strain BTAi1 / ATCC BAA-1182)).